Here is a 78-residue protein sequence, read N- to C-terminus: U-scoloptoxin(04)-Er1d (78 aa).

Residues 1–24 (MTRHLIFAAMLLVCLFVCWNAVGA) form the signal peptide. Positions 25-28 (RDAR) are excised as a propeptide.

Belongs to the scoloptoxin-04 family. Post-translationally, contains 2 disulfide bonds. In terms of tissue distribution, expressed by the venom gland.

The protein resides in the secreted. The polypeptide is U-scoloptoxin(04)-Er1d (Ethmostigmus rubripes (Giant centipede)).